The sequence spans 153 residues: Putative phosphatidylglycerol/phosphatidylinositol transfer protein DDB_G0285639 (153 aa).

The signal sequence occupies residues methionine 1–glycine 21. Asparagine 17, asparagine 61, asparagine 87, asparagine 117, and asparagine 140 each carry an N-linked (GlcNAc...) asparagine glycan.

It belongs to the NPC2 family. In terms of assembly, monomer.

Functionally, catalyzes the intermembrane transfer of phosphatidylglycerol and phosphatidylinositol. The polypeptide is Putative phosphatidylglycerol/phosphatidylinositol transfer protein DDB_G0285639 (Dictyostelium discoideum (Social amoeba)).